The primary structure comprises 433 residues: DNA polymerase processivity factor (433 aa).

A disordered region spans residues arginine 274–glycine 433. Composition is skewed to gly residues over residues serine 289 to serine 298, glycine 325 to glycine 336, and glycine 344 to glycine 359. The span at glycine 360 to lysine 376 shows a compositional bias: basic and acidic residues. The segment covering glycine 385–leucine 398 has biased composition (gly residues). Residue lysine 410 forms a Glycyl lysine isopeptide (Lys-Gly) (interchain with G-Cter in host SUMO1) linkage. 3 positions are modified to phosphoserine: serine 413, serine 415, and serine 418.

It belongs to the herpesviridae polymerase accessory protein family. Forms homodimers. Interacts with host SMARCB1. Interacts with host NCL/nucleolin; this interaction is important for the organization of proteins within viral replication compartments. Interacts with UL112/UL113; this interaction is necessary for efficient viral DNA replication. Interacts with UL84. Interacts with the uracil DNA glycosylase UL114. Interacts with the DNA polymerase catalytic subunit UL54. Interacts with host IRF3. Interacts with host RELA. In terms of processing, phosphorylated by UL97 on serine residues, phosphorylation seems important for UL44 nuclear entry but does not directly affect its role in replication. Post-translationally, sumoylated. Sumoylation on Lys-410 increases viral DNA replication.

The protein resides in the virion. It localises to the host nucleus. Functionally, accessory subunit of the DNA polymerase that plays an essential role in viral DNA replication and acts by increasing the processivity of polymerization. Forms dimers that binds to double-stranded DNA and UL54 specifically to stimulates long chain DNA synthesis efficiently. Plays an important role in maintaining the structure of viral replication compartments by interacting with host nucleolin/NUC. In addition, suppresses innate immune responses through effects on host IRF3 and NF-kappa-B. Mechanistically, interfere with the binding of IRF3 and the p65 NF-kappa-B subunit to the promoters of antiviral genes, thereby inhibiting the expression of these genes. The chain is DNA polymerase processivity factor (UL44) from Homo sapiens (Human).